A 258-amino-acid polypeptide reads, in one-letter code: Thyroxine 5-deiodinase (258 aa).

A helical; Signal-anchor for type II membrane protein membrane pass occupies residues 1-20 (AACILLFPRFLLTAVMLWLL). Topologically, residues 21 to 258 (DFLCIRKKML…QSPGAVVIQV (238 aa)) are extracellular. Residue U122 is part of the active site. Position 122 (U122) is a non-standard amino acid, selenocysteine.

This sequence belongs to the iodothyronine deiodinase family. Monomer. Homodimer. May undergo minor heretodimerization with DIO1 and DIO2.

The protein localises to the cell membrane. It localises to the endosome membrane. The catalysed reaction is 3,3',5'-triiodo-L-thyronine + iodide + A + H(+) = L-thyroxine + AH2. The enzyme catalyses 3,3'-diiodo-L-thyronine + iodide + A + H(+) = 3,3',5-triiodo-L-thyronine + AH2. It catalyses the reaction 3-iodo-L-thyronine + iodide + A + H(+) = 3,5-diiodo-L-thyronine + AH2. It carries out the reaction L-thyronine + iodide + A + H(+) = 3-iodo-L-thyronine + AH2. The catalysed reaction is 3',5'-diiodo-L-thyronine + iodide + A + H(+) = 3,3',5'-triiodo-L-thyronine + AH2. The enzyme catalyses 3'-iodo-L-thyronine + iodide + A + H(+) = 3,3'-diiodo-L-thyronine + AH2. It catalyses the reaction 3,3',5'-triiodothyronamine + iodide + A + H(+) = 3,3',5,5'-tetraiodothyronamine + AH2. It carries out the reaction 3',5'-diiodothyronamine + iodide + A + H(+) = 3,3',5'-triiodothyronamine + AH2. The catalysed reaction is 3,3'-diiodothyronamine + iodide + A + H(+) = 3,3',5-triiodothyronamine + AH2. The enzyme catalyses 3-iodothyronamine + iodide + A + H(+) = 3,5-diiodothyronamine + AH2. It catalyses the reaction 3'-iodothyronamine + iodide + A + H(+) = 3,3'-diiodothyronamine + AH2. It carries out the reaction thyronamine + iodide + A + H(+) = 3-iodothyronamine + AH2. In terms of biological role, plays a crucial role in the metabolism of thyroid hormones (TH) and has specific roles in TH activation and inactivation by deiodination. Catalyzes the deiodination of L-thyroxine (T4) to 3,3',5'-triiodothyronine (rT3) and 3,5,3'-triiodothyronine (T3) to 3,3'-diiodothyronine (3,3'-T2) via inner-ring deiodination (IRD). Catalyzes the deiodination of rT3 to 3',5'-diiodothyronine (3',5'-T2), 3,3'-T2 to 3'-monoiodothyronine (3'-T1) and 3,5-diiodothyronine (3,5-T2) to 3-monoiodothyronine (3-T1) via IRD. Catalyzes the deiodination of 3-T1 to L-thyronine (T0) via outer-ring deiodination (ORD). Catalyzes the tyrosyl ring deiodinations of 3,3',5,5'-tetraiodothyronamine, 3,3',5'-triiodothyronamine, 3,5,3'-triiodothyronamine, 3,5-diiodothyronamine, 3,3'-diiodothyronamine and 3-iodothyronamine. The protein is Thyroxine 5-deiodinase (DIO3) of Gallus gallus (Chicken).